A 351-amino-acid chain; its full sequence is Penicillolysin (351 aa).

The signal sequence occupies residues 1–19 (MRFTTLSTAFLALAQNVYA). Positions 20–174 (FPIESDLSAL…TKALKPLDRR (155 aa)) are excised as a propeptide. 2 N-linked (GlcNAc...) asparagine glycosylation sites follow: Asn52 and Asn181. His302 provides a ligand contact to Zn(2+). Glu303 is a catalytic residue. Zn(2+) is bound by residues His306 and Asp317.

It belongs to the peptidase M35 family. Zn(2+) serves as cofactor.

It catalyses the reaction Preferential cleavage of bonds with hydrophobic residues in P1'. Also 3-Asn-|-Gln-4 and 8-Gly-|-Ser-9 bonds in insulin B chain.. The sequence is that of Penicillolysin (plnC) from Penicillium citrinum.